The following is a 102-amino-acid chain: MANKKIRIRLKAYEHRTLDTAAGKIVETATRTGATVAGPVPLPTERSLYTIIRATHKYKDSREQFEMRTHKRLIDIINPTQKTVDALMKLDLPSGVNVEIKL.

It belongs to the universal ribosomal protein uS10 family. Part of the 30S ribosomal subunit.

Its function is as follows. Involved in the binding of tRNA to the ribosomes. In Streptococcus thermophilus (strain ATCC BAA-491 / LMD-9), this protein is Small ribosomal subunit protein uS10.